The sequence spans 138 residues: Small ribosomal subunit protein uS11c (138 aa).

The interval 1–24 (MTKPIPRIGSRRNGRIGSRKSGRR) is disordered. Over residues 9–24 (GSRRNGRIGSRKSGRR) the composition is skewed to basic residues.

The protein belongs to the universal ribosomal protein uS11 family. In terms of assembly, part of the 30S ribosomal subunit.

It localises to the plastid. The protein resides in the chloroplast. This chain is Small ribosomal subunit protein uS11c, found in Liriodendron tulipifera (Tuliptree).